Here is a 515-residue protein sequence, read N- to C-terminus: Nectin-1 (515 aa).

The N-terminal stretch at 1–30 (MARMGLAGAAGRWWGLALGLTAFFLPGTHT) is a signal peptide. Residues 31-141 (QVVQVNDSMY…GNRESQLNLT (111 aa)) enclose the Ig-like V-type domain. Topologically, residues 31 to 354 (QVVQVNDSMY…GRRAGQMPTA (324 aa)) are extracellular. Asn-36, Asn-72, Asn-139, Asn-202, Asn-286, Asn-297, and Asn-332 each carry an N-linked (GlcNAc...) asparagine glycan. Cys-51 and Cys-124 form a disulfide bridge. Ig-like C2-type domains lie at 145–243 (KPTN…TLNV) and 247–334 (PEVT…VNIT). Intrachain disulfides connect Cys-172–Cys-226 and Cys-269–Cys-316. Residues 282–299 (WTTLNGSLPKGVEAQNRT) form an interaction with FGFR region. A helical transmembrane segment spans residues 355–375 (IIGGVAGSVLLVLIVVGGIIV). Residues 376–515 (ALRRRRHTFK…SFISKKEWYV (140 aa)) lie on the Cytoplasmic side of the membrane. A disordered region spans residues 399–486 (YSKAGIPQHH…DGYGDRTLGY (88 aa)). Phosphoserine occurs at positions 421, 433, and 434. Tyr-435 is modified (phosphotyrosine). Residues 447–464 (GERKVGGPHPKYDEDAKR) are compositionally biased toward basic and acidic residues. Ser-509 carries the phosphoserine modification.

The protein belongs to the nectin family. In terms of assembly, cis- and trans-homodimer. Can form trans-heterodimers with NECTIN3 and with NECTIN4. Interaction between NECTIN1 and NECTIN3 on the pre- and postsynaptic sites, respectively, initiates the formation of puncta adherentia junctions between axons and dendrites. Interacts (via cytoplasmic domain) with AFDN (via PDZ domain); this interaction recruits NECTIN1 to cadherin-based adherens junctions and provides a connection with the actin cytoskeleton. Interacts with integrin alphaV/beta3. Interacts (via Ig-like C2-type domain 2) with FGFR1, FGFR2 and FGFR3. (Microbial infection) Interacts with herpes pseudorabies virus/PRV envelope glycoprotein D.

Its subcellular location is the cell membrane. It is found in the cell junction. It localises to the adherens junction. The protein localises to the presynaptic cell membrane. Functionally, cell adhesion molecule that promotes cell-cell contacts and plays important roles in the development of the nervous system. Acts by forming homophilic or heterophilic trans-dimers. Heterophilic interactions have been detected between NECTIN1 and NECTIN3 and between NECTIN1 and NECTIN4. Involved in axon guidance by promoting contacts between the commissural axons and the floor plate cells. Involved in synaptogegesis. Has some neurite outgrowth-promoting activity. Promotes formation of checkerboard-like cellular pattern of hair cells and supporting cells in the auditory epithelium via heterophilic interaction with NECTIN3: NECTIN1 is present in the membrane of hair cells and associates with NECTIN3 on supporting cells, thereby mediating heterotypic adhesion between these two cell types. Required for enamel mineralization. In terms of biological role, (Microbial infection) Acts as a receptor for pseudorabies virus/PRV. The protein is Nectin-1 of Mus musculus (Mouse).